The following is a 171-amino-acid chain: S-ribosylhomocysteine lyase (171 aa).

Fe cation-binding residues include histidine 54, histidine 58, and cysteine 128.

The protein belongs to the LuxS family. In terms of assembly, homodimer. Fe cation is required as a cofactor.

It catalyses the reaction S-(5-deoxy-D-ribos-5-yl)-L-homocysteine = (S)-4,5-dihydroxypentane-2,3-dione + L-homocysteine. Its function is as follows. Involved in the synthesis of autoinducer 2 (AI-2) which is secreted by bacteria and is used to communicate both the cell density and the metabolic potential of the environment. The regulation of gene expression in response to changes in cell density is called quorum sensing. Catalyzes the transformation of S-ribosylhomocysteine (RHC) to homocysteine (HC) and 4,5-dihydroxy-2,3-pentadione (DPD). This Salmonella arizonae (strain ATCC BAA-731 / CDC346-86 / RSK2980) protein is S-ribosylhomocysteine lyase.